Here is a 128-residue protein sequence, read N- to C-terminus: 3-aminoacrylate deaminase RutC (128 aa).

It belongs to the RutC family. In terms of assembly, homotrimer.

The enzyme catalyses (Z)-3-aminoacrylate + H2O + H(+) = 3-oxopropanoate + NH4(+). In terms of biological role, involved in pyrimidine catabolism. Catalyzes the deamination of 3-aminoacrylate to malonic semialdehyde, a reaction that can also occur spontaneously. RutC may facilitate the reaction and modulate the metabolic fitness, rather than catalyzing essential functions. This Escherichia coli (strain SE11) protein is 3-aminoacrylate deaminase RutC.